Consider the following 534-residue polypeptide: MLLVDVANASADVAAMSARLAKVARIAELLRTAGRQGDARLVRVVVSWLSGELTQRQIGVGWRSVRSVPDPAAQPSLTVEDVDARFGEIGSTSGKGSQARRAALLAELFAAATAVEQVFLRRLLTGELRQGALGGVMADAVGKAAGVPSAVVRRAAMLGGDLPAVAAAAVTDGESALAQFTLQVGRPVGPMLAQTATGVADALDRFGGTALFEAKLDGARVQIHRRGDAVSVFTRSLDDVTARLPEVVDATLALPVTELIADAEAIALRPDGRPHRFQITASRFGRRGGTPDAGTQRLSVFFFDLLHADGVDLLDLPTGERIATLDATVPREQRVDRLLTSDPEAAQAFLDATLAAGHEGVMAKSPTAPYEAGRRGAGWLKVKPVHTLDLVVLAVEWGSGRRTGKLSNIHLGARDPATGGFVMLGKTFKGMTDEMLAWQTERFLELADGAAPAATADHGAAPAATADHGAADGFTVTVRPEQVVEIAFDGIQTSSRYPGGMALRFARVLCYRDDKTAAEADTIDTVRALHERAN.

Glutamate 213 is a binding site for ATP. The N6-AMP-lysine intermediate role is filled by lysine 215. ATP is bound by residues arginine 220, arginine 235, glutamate 264, phenylalanine 303, arginine 375, and lysine 381.

This sequence belongs to the ATP-dependent DNA ligase family. Requires Mg(2+) as cofactor.

It carries out the reaction ATP + (deoxyribonucleotide)n-3'-hydroxyl + 5'-phospho-(deoxyribonucleotide)m = (deoxyribonucleotide)n+m + AMP + diphosphate.. DNA ligase that seals nicks in double-stranded DNA during DNA replication, DNA recombination and DNA repair. The sequence is that of Probable DNA ligase from Mycolicibacterium vanbaalenii (strain DSM 7251 / JCM 13017 / BCRC 16820 / KCTC 9966 / NRRL B-24157 / PYR-1) (Mycobacterium vanbaalenii).